Consider the following 141-residue polypeptide: Hemoglobin subunit alpha (141 aa).

One can recognise a Globin domain in the interval 1–141 (VLSEADKSNV…VSTVLTSKYR (141 aa)). His58 provides a ligand contact to O2. His87 provides a ligand contact to heme b.

This sequence belongs to the globin family. As to quaternary structure, heterotetramer of two alpha chains and two beta chains. When oxygenated in vitro, exists virtually only in polymeric form. When deoxygenated, forms tetramers, octamers and larger polymers. In terms of tissue distribution, red blood cells.

Functionally, involved in oxygen transport from the lung to the various peripheral tissues. This chain is Hemoglobin subunit alpha, found in Paleosuchus palpebrosus (Cuvier's smooth-fronted caiman).